A 530-amino-acid chain; its full sequence is Capsid protein VP1 (530 aa).

The segment at 1-20 is disordered; that stretch reads MMMASKDATSSVDGASGAGQ. The interval 1–225 is shell domain; it reads MMMASKDATS…FLFLVPPTVE (225 aa). The segment at 226–278 is P1 sub-domain 1; that stretch reads QKTRPFTLPNLPLSSLSNSRAPLPISSMGISPDNVQSVQFQNGRCTLDGRLVG. The protruding domain stretch occupies residues 226-530; it reads QKTRPFTLPN…SARGRLGLRR (305 aa). Residues 279 to 405 form a P2 sub-domain region; that stretch reads TTPVSLSHVA…GSSITEATHL (127 aa). Residues 406–530 are P1 sub-domain 2; that stretch reads APSVYPPGFG…SARGRLGLRR (125 aa). Residues 523-530 form a plays a role in binding to host histo-blood group structures antigens and in the formation of P-particles region; that stretch reads RGRLGLRR.

The protein belongs to the caliciviridae capsid protein family. In terms of assembly, homodimer. Homomultimer. Interacts with the minor capsid protein VP2. Interacts (via C-terminus) with host type I histo-blood group structures antigens at the surface of target cells. Post-translationally, may be cleaved by host protease to generate soluble capsid protein. Assembled capsid cannot be cleaved.

It localises to the virion. Its subcellular location is the host cytoplasm. Functionally, capsid protein self assembles to form an icosahedral capsid with a T=3 symmetry, about 38 nm in diameter, and consisting of 180 capsid proteins. A smaller form of capsid with a diameter of 23 nm might be capsid proteins assembled as icosahedron with T=1 symmetry. The capsid encapsulates the genomic RNA and is decorated with VP2 proteins. Attaches virion to target cells by binding histo-blood group antigens (HBGAs) present on gastroduodenal epithelial cells. Its function is as follows. The soluble capsid protein may play a role in viral immunoevasion. This chain is Capsid protein VP1, found in Norovirus (strain Human/NoV/United States/Norwalk/1968/GI) (Hu/NV/NV/1968/US).